A 411-amino-acid chain; its full sequence is LL-diaminopimelate aminotransferase (411 aa).

Residues tyrosine 15 and glycine 42 each coordinate substrate. Pyridoxal 5'-phosphate is bound by residues tyrosine 72, 108–109 (SK), tyrosine 132, asparagine 187, tyrosine 218, and 246–248 (SFS). Residues lysine 109, tyrosine 132, and asparagine 187 each contribute to the substrate site. An N6-(pyridoxal phosphate)lysine modification is found at lysine 249. Pyridoxal 5'-phosphate-binding residues include arginine 257 and asparagine 292. Residues asparagine 292 and arginine 388 each coordinate substrate.

It belongs to the class-I pyridoxal-phosphate-dependent aminotransferase family. LL-diaminopimelate aminotransferase subfamily. Homodimer. It depends on pyridoxal 5'-phosphate as a cofactor.

It catalyses the reaction (2S,6S)-2,6-diaminopimelate + 2-oxoglutarate = (S)-2,3,4,5-tetrahydrodipicolinate + L-glutamate + H2O + H(+). Its pathway is amino-acid biosynthesis; L-lysine biosynthesis via DAP pathway; LL-2,6-diaminopimelate from (S)-tetrahydrodipicolinate (aminotransferase route): step 1/1. In terms of biological role, involved in the synthesis of meso-diaminopimelate (m-DAP or DL-DAP), required for both lysine and peptidoglycan biosynthesis. Catalyzes the direct conversion of tetrahydrodipicolinate to LL-diaminopimelate. In Gloeothece citriformis (strain PCC 7424) (Cyanothece sp. (strain PCC 7424)), this protein is LL-diaminopimelate aminotransferase.